A 312-amino-acid polypeptide reads, in one-letter code: tRNA dimethylallyltransferase (312 aa).

ATP is bound at residue 11-18 (GPTAVGKT). 13–18 (TAVGKT) contributes to the substrate binding site. Residues 159-163 (QRVLR) are interaction with substrate tRNA.

Belongs to the IPP transferase family. Monomer. Mg(2+) serves as cofactor.

It catalyses the reaction adenosine(37) in tRNA + dimethylallyl diphosphate = N(6)-dimethylallyladenosine(37) in tRNA + diphosphate. Catalyzes the transfer of a dimethylallyl group onto the adenine at position 37 in tRNAs that read codons beginning with uridine, leading to the formation of N6-(dimethylallyl)adenosine (i(6)A). The protein is tRNA dimethylallyltransferase of Macrococcus caseolyticus (strain JCSC5402) (Macrococcoides caseolyticum).